The chain runs to 338 residues: Flap endonuclease 1 (338 aa).

The N-domain stretch occupies residues Met-1–Arg-98. Asp-27, Asp-80, Glu-152, Glu-154, Asp-173, Asp-175, and Asp-236 together coordinate Mg(2+). The interval Ala-116–Gly-257 is I-domain. Positions Arg-330–Phe-338 are interaction with PCNA.

This sequence belongs to the XPG/RAD2 endonuclease family. FEN1 subfamily. In terms of assembly, interacts with PCNA. PCNA stimulates the nuclease activity without altering cleavage specificity. Mg(2+) serves as cofactor.

Functionally, structure-specific nuclease with 5'-flap endonuclease and 5'-3' exonuclease activities involved in DNA replication and repair. During DNA replication, cleaves the 5'-overhanging flap structure that is generated by displacement synthesis when DNA polymerase encounters the 5'-end of a downstream Okazaki fragment. Binds the unpaired 3'-DNA end and kinks the DNA to facilitate 5' cleavage specificity. Cleaves one nucleotide into the double-stranded DNA from the junction in flap DNA, leaving a nick for ligation. Also involved in the base excision repair (BER) pathway. Acts as a genome stabilization factor that prevents flaps from equilibrating into structures that lead to duplications and deletions. Also possesses 5'-3' exonuclease activity on nicked or gapped double-stranded DNA. This Methanosarcina acetivorans (strain ATCC 35395 / DSM 2834 / JCM 12185 / C2A) protein is Flap endonuclease 1.